We begin with the raw amino-acid sequence, 297 residues long: uncharacterized protein (297 aa).

A run of 4 helical transmembrane segments spans residues 3–23 (DYIY…LYML), 38–58 (VIHI…MPAL), 103–123 (IEGI…TALL), and 128–148 (YVFL…LLAM).

It is found in the cell membrane. This is an uncharacterized protein from Bacillus subtilis (strain 168).